Here is a 261-residue protein sequence, read N- to C-terminus: Ribosome biogenesis protein NSA2 (261 aa).

A disordered region spans residues 1–34; sequence MPQNEYIEQHIKQHGRRLDYEERKRKKAAREGHR. Basic and acidic residues predominate over residues 7–34; sequence IEQHIKQHGRRLDYEERKRKKAAREGHR. 2 consecutive short sequence motifs (nuclear localization signal) follow at residues 15 to 22 and 51 to 58; these read GRRLDYEE and AKKRYSEK. The disordered stretch occupies residues 61-85; that stretch reads MKKKIKTHQESKVKGPATPKEDDGE.

This sequence belongs to the eukaryotic ribosomal protein eS8 family. Ribosome biogenesis protein NSA2 subfamily. As to quaternary structure, component of the pre-66S ribosomal particle. Interacts with NOP7 and RRP1. Interacts with RSA4 (via WD repeats).

Its subcellular location is the nucleus. It is found in the nucleolus. Involved in the biogenesis of the 60S ribosomal subunit. May play a part in the quality control of pre-60S particles. The chain is Ribosome biogenesis protein NSA2 (NSA2) from Debaryomyces hansenii (strain ATCC 36239 / CBS 767 / BCRC 21394 / JCM 1990 / NBRC 0083 / IGC 2968) (Yeast).